A 2890-amino-acid chain; its full sequence is MSKKIPLKNRLRADFTKTPTDLEVPNLLSLQRDSYDSFLYSKDGKESGIEKVFKSIFPIQDEHNRITLEYAGCEFGKSKYTVREAMERGITYSIPLKIKVRLILWEKDTKSGEKNGIKDIKEQSIFIREIPLMTERTSFIINGVERVVVNQLHRSPGVIFKEEESSTSLNKLIYTGQIIPDRGSWLYFEYDSKDVLYARINKRRKVPVTILFRAMDYQKQDIIKMFYPLVKVRYENDKYLIPFASLDANQRMEFDLKDSQGKIILLAGKKLTSKKIKELKENHLEWVEYPMDILINRHLAEPVMVGKEVLLDMLTQLDKNKLEKIHDLGVQEFVIINDLALGHDASIIHSFLADYESLRLLKQTEKIDDENALAAIRIHKVMKPGDPVTTEVAKQFVKKLFFDPERYDLTMVGRMKMNHKLGLHVPDYITTLTHEDIITTVKYLMKIKNNQGKIDDRDHLGNRRIRAVGELLANELHSGLVKMQKTIKDKLTTMSGAFDSLMPHDLVNSKMITSTIMEFFMGGQLSQFMDQTNPLSEVTHKRRLSALGEGGLVKDRVGFEARDVHPTHYGRICPIETPEGQNIGLINTLSTFTRVNDLGFIEAPYKKVVDGKVVGETIYLTAIQEDSHIIAPASTPIDEEGNILGDLIETRVEGEIVLNEKSKVTLMDLSSSMLVGVAASLIPFLEHDDANRALMGTNMQRQAVPLLRSDAPIVGTGIEKIIARDSWGAIKANRAGAVEKIDSKNIYILGEGKEEAYIDAYSLQKNLRTNQNTSFNQVPIVKVGDKVEAGQIIADGPSMDRGELALGKNVRVAFMPWNGYNFEDAIVVSERITKDDIFTSTHIYEKEVDARELKHGVEEFTADIPDVKEEALAHLDESGIVKVGTYVSAGMILVGKTSPKGEIKSTPEERLLRAIFGDKAGHVVNKSLYCPPSLEGTVIDVKVFTKKGYEKDARVLSAYEEEKAKLDMEHFDRLTMLNREELLRVSSLLSQAILEEPFSHNGKDYKEGDQIPKEEIASINRFTLASLVKKYSKEVQNHYEITKNNFLEQKKVLGEEHEEKLSILEKDDILPNGVIKKVKLYIATKRKLKVGDKMAGRHGNKGIVSNIVPVADMPYTADGEPVDIVLNPLGVPSRMNIGQILEMHLGLVGKEFGKQIARMLEDKTKDFAKELRVKMLEIANAINEKDPLTIHALENCSDEELLEYAKDWSKGVKMAIPVFEGISQEKFYKLFELAKIAMDGKMDLYDGRTGEKMRERVNVGYMYMIKLHHLVDEKVHARSTGPYSLVTHQPVGGKALFGGQRFGEMEVWALEAYGAAHTLKEMLTIKSDDIRGRENAYRAIVKGEQVGESEIPETFYVLTKELQSLALDINIFGDDVDEDGAPKPIVIKEDDRPKDFSSFQLTLASPEKIHSWSYGEVKKPETINYRTLKPERDGLFCMKIFGPTKDYECLCGKYKKPRFKDIGTCEKCGVAITHSKVRRFRMGHIELATPVAHIWYVNSLPSRISTLLGVKMKDLERVLYYEAYIVKEPGEAAYDNEGTKLVMKYDILNEEQYQNISRRYEDRGFIAQMGGEAIKDLLEEIDLITLLQSLKEEVKDTNSDAKKKKLIKRLKVVESFLNSGNRPEWMMLTVLPVLPPDLRPLVALDGGKFAVSDVNELYRRVINRNQRLKRLMELGAPEIIVRNEKRMLQEAVDVLFDNGRSTNAVKGANKRPLKSLSEIIKGKQGRFRQNLLGKRVDFSGRSVIVVGPNLKMDECGLPKNMALELFKPHLLSKLEERGYATTLKQAKRMIEQKSNEVWECLQEITEGYPVLLNRAPTLHKQSIQAFHPKLIDGKAIQLHPLVCSAFNADFDGDQMAVHVPLSQEAIAECKVLMLSSMNILLPASGKAVAIPSQDMVLGLYYLSLEKSGVKGEHKLFSSVNEIITAIDTKELDIHAKIRVLDQGNIIATSAGRMIIKSILPDFIPTDLWNRPMKKKDIGVLVDYVHKVGGIGITATFLDNLKTLGFRYATKAGISISMEDIITPKDKQKMVEKAKVEVKKIQQQYDQGLLTDQERYNKIIDTWTEVNDKMSKEMMIAIAKDKEGFNSIYMMADSGARGSAAQIRQLSAMRGLMTKPDGSIIETPIISNFKEGLNVLEYFNSTHGARKGLADTALKTANAGYLTRKLIDVSQNVKVVSDDCGTHEGIEITDIAVGSELIEPLEERIFGRVLLEDVIDPITNEILLYADTLIDEEGAKKVVEAGIKSITIRTPVTCKAPKGVCAKCYGLNLGEGKMSYPGEAVGVVAAQSIGEPGTQLTLRTFHVGGTASRSQDEREIVASKEGFVRFYNLRTYTNKEGKNIIANRRNASILVVEPKIKAPFDGELRIETVYEEVVVSVKNGEQEAKFVLRRSDIVKPSELAGVGGKIEGKVYLPYASGHKVHKGGSIADIIQEGWNVPNRIPYASELLVKDNDPIAQDVYAKEKGTIKYYVLEANHLERTHGIKKGDMVSEKGLFAVVADDNGREAARHYIARGSEILIDDNSEVSANSVISKLTTNTFKTIATWDPYNTPIIADFKGKVSFVDVIAGVTVAEKEDENTGITSLVVNDYIPSGYKPSLFLEGANGEEMRYFLEPKTSIAISDGSSVEQAEVLAKIPKATVKSRDITGGLPRVSELFEARKPKPKDVAILSEVDGIVSFGKPIRNKEHIIVTSKDGRSMDYFVDKGKQILVHADEFVHAGEAMTDGVISSHDILRISGEKELYKYIVSEVQQVYRRQGVSIADKHIEIIVSQMLRQVRILDSGDSKFIEGDLVSKKLFKEENARMIALKGEPAIAEPVLLGITRAAIGSDSIISAASFQETTKVLTEASIAMKKDFLEDLKENVVLGRMIPVGTGMYKNKKIVLRTLEDGPKF.

The DNA-directed RNA polymerase subunit beta stretch occupies residues 1–1377; sequence MSKKIPLKNR…DINIFGDDVD (1377 aa). Positions 1384-2890 are DNA-directed RNA polymerase subunit beta'; it reads PIVIKEDDRP…LRTLEDGPKF (1507 aa). Residues Cys1449, Cys1451, Cys1465, and Cys1468 each contribute to the Zn(2+) site. Mg(2+) contacts are provided by Asp1849, Asp1851, and Asp1853. Residues Cys2179, Cys2253, Cys2260, and Cys2263 each contribute to the Zn(2+) site.

The protein in the N-terminal section; belongs to the RNA polymerase beta chain family. This sequence in the C-terminal section; belongs to the RNA polymerase beta' chain family. As to quaternary structure, the RNAP catalytic core consists of 2 alpha, 1 beta/beta' and 1 omega subunit. When a sigma factor is associated with the core the holoenzyme is formed, which can initiate transcription. Mg(2+) serves as cofactor. It depends on Zn(2+) as a cofactor.

The catalysed reaction is RNA(n) + a ribonucleoside 5'-triphosphate = RNA(n+1) + diphosphate. Functionally, DNA-dependent RNA polymerase catalyzes the transcription of DNA into RNA using the four ribonucleoside triphosphates as substrates. In Helicobacter pylori (strain HPAG1), this protein is Bifunctional DNA-directed RNA polymerase subunit beta-beta' (rpoBC).